The following is a 654-amino-acid chain: Translation factor GUF1, mitochondrial (654 aa).

A tr-type G domain is found at 57–237 (ENYRNFSIVA…SVIKNIPSPV (181 aa)). Residues 66–73 (AHVDHGKS), 130–134 (DTPGH), and 184–187 (NKID) each bind GTP.

The protein belongs to the TRAFAC class translation factor GTPase superfamily. Classic translation factor GTPase family. LepA subfamily.

It is found in the mitochondrion inner membrane. The enzyme catalyses GTP + H2O = GDP + phosphate + H(+). In terms of biological role, promotes mitochondrial protein synthesis. May act as a fidelity factor of the translation reaction, by catalyzing a one-codon backward translocation of tRNAs on improperly translocated ribosomes. Binds to mitochondrial ribosomes in a GTP-dependent manner. The sequence is that of Translation factor GUF1, mitochondrial from Candida dubliniensis (strain CD36 / ATCC MYA-646 / CBS 7987 / NCPF 3949 / NRRL Y-17841) (Yeast).